Reading from the N-terminus, the 212-residue chain is Guanylate kinase (212 aa).

The Guanylate kinase-like domain occupies 5-187 (GILCIISAPS…ALMHLQSIML (183 aa)). 12–19 (APSGTGKS) serves as a coordination point for ATP.

It belongs to the guanylate kinase family.

It is found in the cytoplasm. The catalysed reaction is GMP + ATP = GDP + ADP. Its function is as follows. Essential for recycling GMP and indirectly, cGMP. The sequence is that of Guanylate kinase from Blochmanniella pennsylvanica (strain BPEN).